The following is a 368-amino-acid chain: Agmatine deiminase (368 aa).

The active-site Amidino-cysteine intermediate is Cys357.

This sequence belongs to the agmatine deiminase family. In terms of assembly, homodimer.

It carries out the reaction agmatine + H2O = N-carbamoylputrescine + NH4(+). The protein operates within amine and polyamine biosynthesis; putrescine biosynthesis via agmatine pathway; N-carbamoylputrescine from agmatine: step 1/1. In terms of biological role, mediates the hydrolysis of agmatine into N-carbamoylputrescine in the arginine decarboxylase (ADC) pathway of putrescine biosynthesis, a basic polyamine. The polypeptide is Agmatine deiminase (Pseudomonas putida (strain ATCC 47054 / DSM 6125 / CFBP 8728 / NCIMB 11950 / KT2440)).